Consider the following 250-residue polypeptide: rRNA methyltransferase 2, mitochondrial (250 aa).

The transit peptide at 1-35 directs the protein to the mitochondrion; it reads MRLVFTGNCVFKRLLHTEIGGKYAKQQPRNLKGRS. Residues 90–93, Asp-119, 136–137, and Asp-161 each bind S-adenosyl-L-methionine; these read PGSW and DF. Catalysis depends on Lys-201, which acts as the Proton acceptor.

Belongs to the class I-like SAM-binding methyltransferase superfamily. RNA methyltransferase RlmE family.

It is found in the mitochondrion. The catalysed reaction is a uridine in rRNA + S-adenosyl-L-methionine = a 2'-O-methyluridine in rRNA + S-adenosyl-L-homocysteine + H(+). S-adenosyl-L-methionine-dependent 2'-O-ribose methyltransferase that catalyzes the formation of 2'-O-methyluridine at position 1579 (Um1579) in the mitochondrial large subunit ribosomal RNA (mtLSU rRNA), a universally conserved modification in the peptidyl transferase domain of the mtLSU rRNA. This activity may require prior 2'-O-methylguanosine modification at position 1580 (Gm1580) by MRM3. Essential for late-stage assembly of mtLSU required for efficient translation of mitochondrial DNA encoded proteins; methyltransferase activity is not required for this function. Essential for mitochondrial respiratory function. The chain is rRNA methyltransferase 2, mitochondrial from Drosophila melanogaster (Fruit fly).